We begin with the raw amino-acid sequence, 138 residues long: uncharacterized protein (138 aa).

Positions 74-96 (RRRSPSLPARRPPTPREDALEDY) are disordered. Residues 87–96 (TPREDALEDY) show a composition bias toward basic and acidic residues.

This is an uncharacterized protein from Orgyia pseudotsugata (Douglas-fir tussock moth).